A 95-amino-acid chain; its full sequence is MIMASICTMAWVYGSVQGVGFRYSTQREALQLGVTGYARNLDDGGVEVLVCGEAEQVEKLIAWLKAGGPRSARVDRVLTEPHQPTRSWDKFAILY.

The region spanning 7–95 is the Acylphosphatase-like domain; the sequence is CTMAWVYGSV…RSWDKFAILY (89 aa). Active-site residues include Arg22 and Asn40.

The protein belongs to the acylphosphatase family.

The enzyme catalyses an acyl phosphate + H2O = a carboxylate + phosphate + H(+). The protein is Acylphosphatase (acyP) of Klebsiella pneumoniae subsp. pneumoniae (strain ATCC 700721 / MGH 78578).